Reading from the N-terminus, the 270-residue chain is Phosphoribosylformylglycinamidine synthase subunit PurQ (270 aa).

A Glutamine amidotransferase type-1 domain is found at 5-251 (ALVLHATGTN…VIRERDSEEE (247 aa)). The Nucleophile role is filled by Cys95. Residues His236 and Glu238 contribute to the active site.

In terms of assembly, part of the FGAM synthase complex composed of 1 PurL, 1 PurQ and 2 PurS subunits.

The protein localises to the cytoplasm. It catalyses the reaction N(2)-formyl-N(1)-(5-phospho-beta-D-ribosyl)glycinamide + L-glutamine + ATP + H2O = 2-formamido-N(1)-(5-O-phospho-beta-D-ribosyl)acetamidine + L-glutamate + ADP + phosphate + H(+). The enzyme catalyses L-glutamine + H2O = L-glutamate + NH4(+). Its pathway is purine metabolism; IMP biosynthesis via de novo pathway; 5-amino-1-(5-phospho-D-ribosyl)imidazole from N(2)-formyl-N(1)-(5-phospho-D-ribosyl)glycinamide: step 1/2. Functionally, part of the phosphoribosylformylglycinamidine synthase complex involved in the purines biosynthetic pathway. Catalyzes the ATP-dependent conversion of formylglycinamide ribonucleotide (FGAR) and glutamine to yield formylglycinamidine ribonucleotide (FGAM) and glutamate. The FGAM synthase complex is composed of three subunits. PurQ produces an ammonia molecule by converting glutamine to glutamate. PurL transfers the ammonia molecule to FGAR to form FGAM in an ATP-dependent manner. PurS interacts with PurQ and PurL and is thought to assist in the transfer of the ammonia molecule from PurQ to PurL. The polypeptide is Phosphoribosylformylglycinamidine synthase subunit PurQ (Treponema denticola (strain ATCC 35405 / DSM 14222 / CIP 103919 / JCM 8153 / KCTC 15104)).